The following is a 192-amino-acid chain: dTTP/UTP pyrophosphatase (192 aa).

The active-site Proton acceptor is the Asp-72.

This sequence belongs to the Maf family. YhdE subfamily. A divalent metal cation is required as a cofactor.

It localises to the cytoplasm. The catalysed reaction is dTTP + H2O = dTMP + diphosphate + H(+). It catalyses the reaction UTP + H2O = UMP + diphosphate + H(+). Its function is as follows. Nucleoside triphosphate pyrophosphatase that hydrolyzes dTTP and UTP. May have a dual role in cell division arrest and in preventing the incorporation of modified nucleotides into cellular nucleic acids. In Geobacter metallireducens (strain ATCC 53774 / DSM 7210 / GS-15), this protein is dTTP/UTP pyrophosphatase.